The primary structure comprises 176 residues: Protein tyrosine phosphatase PRL-1 (176 aa).

The Tyrosine-protein phosphatase domain maps to Gly13 to Glu165. Residues Cys52 and Cys107 are joined by a disulfide bond. The Proton donor role is filled by Asp75. The active-site Phosphocysteine intermediate is Cys107. Residue Ala109 to Arg113 coordinates substrate. Cys173 carries the post-translational modification Cysteine methyl ester. Cys173 is lipidated: S-farnesyl cysteine. Positions Ala174–Met176 are cleaved as a propeptide — removed in mature form.

It belongs to the protein-tyrosine phosphatase family.

It is found in the flagellar pocket. It carries out the reaction O-phospho-L-tyrosyl-[protein] + H2O = L-tyrosyl-[protein] + phosphate. Activated in a reduced environment which promotes the reduction of the disulfide bond between the regulatory Cys-52 and the catalytic Cys-107 residues. Inhibited by sodium orthovanadate. Functionally, has protein tyrosine phosphatase activity. The protein is Protein tyrosine phosphatase PRL-1 of Trypanosoma cruzi (strain CL Brener).